Here is a 302-residue protein sequence, read N- to C-terminus: MYYGFDIGGTKIALGVFDSTRRLQWEKRVPTPHTSYSAFLDAVCELVAEADQRFGVKGSVGIGIPGMPETEDGTLYAANVPAASGKPLRADLSARLDRDVRLDNDANCFALSEAWDDEFTQYPLVMGLILGTGGGGLVLNGKPITGQSYITGEFGHMRLPVDALTLMGFDFPLRRCGCGQMGCIENYLSGRGFAWLYQHYYDQSLQAPEIIALWEQGDEQAHAHVERYLDLLAVCLGNILTIVDPDLLVIGGGLSNFTAITTQLAERLPRHLLPVARAPRIERARHGDAGGMRGAAFLHLTD.

ATP contacts are provided by residues glycine 4–lysine 11 and glycine 133–leucine 139. The Zn(2+) site is built by histidine 156, cysteine 176, cysteine 178, and cysteine 183.

It belongs to the ROK (NagC/XylR) family. NagK subfamily.

The catalysed reaction is N-acetyl-D-glucosamine + ATP = N-acetyl-D-glucosamine 6-phosphate + ADP + H(+). It participates in cell wall biogenesis; peptidoglycan recycling. Catalyzes the phosphorylation of N-acetyl-D-glucosamine (GlcNAc) derived from cell-wall degradation, yielding GlcNAc-6-P. In Salmonella typhi, this protein is N-acetyl-D-glucosamine kinase.